A 257-amino-acid polypeptide reads, in one-letter code: uncharacterized protein (257 aa).

It to yeast YKR015c.

This is an uncharacterized protein from Saccharomyces cerevisiae (strain ATCC 204508 / S288c) (Baker's yeast).